Reading from the N-terminus, the 367-residue chain is MKEVPKEPKKLREGYTTGACATAATRAALLTLISGEVQDESTIYLPVGRFATFHLEECEYRTSSAVASIIKDAGDDPDATHGALIISEVSWCNGVDIIIDGGVGVGRVTKPGLPVPVGEAAINPVPRKMLKETAQQLLAEYNIQKGVKVVISVPEGEEMAKKTLNARLGILGGISILGTRGIVVPFSTAAYKASIVQAISVAKASNCEHVVITTGGRSEKYGMKQFPELPEEAFIQMGDFVGFTLKQCKKQGMKKVSLVGMMGKFSKVAQGVMMVHSKSAPIDFNFLAKAASESGASAELVEEIKGANTASQVGDLMTQSGHHQFFEKLCEYCCLSALKEVGDGIDVDTSLYTLKGDFLGQAVQHGN.

Belongs to the CbiD family.

It carries out the reaction Co-precorrin-5B + S-adenosyl-L-methionine = Co-precorrin-6A + S-adenosyl-L-homocysteine. It functions in the pathway cofactor biosynthesis; adenosylcobalamin biosynthesis; cob(II)yrinate a,c-diamide from sirohydrochlorin (anaerobic route): step 6/10. Catalyzes the methylation of C-1 in cobalt-precorrin-5B to form cobalt-precorrin-6A. This is Cobalt-precorrin-5B C(1)-methyltransferase from Priestia megaterium (Bacillus megaterium).